A 258-amino-acid chain; its full sequence is uncharacterized protein (258 aa).

This is an uncharacterized protein from Haemophilus influenzae (Bacteriophage HP1).